The chain runs to 216 residues: Uridine kinase (216 aa).

16 to 23 contacts ATP; it reads GASASGKS.

This sequence belongs to the uridine kinase family.

Its subcellular location is the cytoplasm. It catalyses the reaction uridine + ATP = UMP + ADP + H(+). The enzyme catalyses cytidine + ATP = CMP + ADP + H(+). It participates in pyrimidine metabolism; CTP biosynthesis via salvage pathway; CTP from cytidine: step 1/3. The protein operates within pyrimidine metabolism; UMP biosynthesis via salvage pathway; UMP from uridine: step 1/1. The sequence is that of Uridine kinase from Pasteurella multocida (strain Pm70).